Here is an 804-residue protein sequence, read N- to C-terminus: Protein translocase subunit SecA (804 aa).

ATP contacts are provided by residues Q100, 118-122 (GEGKT), and D508.

This sequence belongs to the SecA family. As to quaternary structure, monomer and homodimer. Part of the essential Sec protein translocation apparatus which comprises SecA, SecYEG and auxiliary proteins SecDF. Other proteins may also be involved.

The protein resides in the cell membrane. It localises to the cytoplasm. It catalyses the reaction ATP + H2O + cellular proteinSide 1 = ADP + phosphate + cellular proteinSide 2.. Part of the Sec protein translocase complex. Interacts with the SecYEG preprotein conducting channel. Has a central role in coupling the hydrolysis of ATP to the transfer of proteins into and across the cell membrane, serving as an ATP-driven molecular motor driving the stepwise translocation of polypeptide chains across the membrane. This Leuconostoc citreum (strain KM20) protein is Protein translocase subunit SecA.